Here is a 452-residue protein sequence, read N- to C-terminus: GTPase Der (452 aa).

2 consecutive EngA-type G domains span residues 9–170 (KIIA…PEED) and 185–362 (LQIV…KTWN). Residues 15 to 22 (GRPNVGKS), 62 to 66 (DTPGL), 124 to 127 (NKCE), 191 to 198 (GRPNAGKS), 238 to 242 (DTAGL), and 303 to 306 (NKWD) contribute to the GTP site. The 86-residue stretch at 363–448 (KKITTSKLNE…PIRFNYIKTK (86 aa)) folds into the KH-like domain.

The protein belongs to the TRAFAC class TrmE-Era-EngA-EngB-Septin-like GTPase superfamily. EngA (Der) GTPase family. As to quaternary structure, associates with the 50S ribosomal subunit.

In terms of biological role, GTPase that plays an essential role in the late steps of ribosome biogenesis. This Rickettsia bellii (strain RML369-C) protein is GTPase Der.